A 65-amino-acid chain; its full sequence is Large ribosomal subunit protein uL30 (65 aa).

Belongs to the universal ribosomal protein uL30 family. In terms of assembly, part of the 50S ribosomal subunit.

The sequence is that of Large ribosomal subunit protein uL30 from Aster yellows witches'-broom phytoplasma (strain AYWB).